Here is an 89-residue protein sequence, read N- to C-terminus: Acylphosphatase (89 aa).

Positions 4–89 constitute an Acylphosphatase-like domain; the sequence is SRRFLVSGTV…EQPPEGFRVL (86 aa). Residues arginine 19 and asparagine 37 contribute to the active site.

The protein belongs to the acylphosphatase family.

The catalysed reaction is an acyl phosphate + H2O = a carboxylate + phosphate + H(+). This Alkalilimnicola ehrlichii (strain ATCC BAA-1101 / DSM 17681 / MLHE-1) protein is Acylphosphatase (acyP).